Here is a 254-residue protein sequence, read N- to C-terminus: Leucyl/phenylalanyl-tRNA--protein transferase (254 aa).

The protein belongs to the L/F-transferase family.

The protein localises to the cytoplasm. It catalyses the reaction N-terminal L-lysyl-[protein] + L-leucyl-tRNA(Leu) = N-terminal L-leucyl-L-lysyl-[protein] + tRNA(Leu) + H(+). The enzyme catalyses N-terminal L-arginyl-[protein] + L-leucyl-tRNA(Leu) = N-terminal L-leucyl-L-arginyl-[protein] + tRNA(Leu) + H(+). It carries out the reaction L-phenylalanyl-tRNA(Phe) + an N-terminal L-alpha-aminoacyl-[protein] = an N-terminal L-phenylalanyl-L-alpha-aminoacyl-[protein] + tRNA(Phe). Its function is as follows. Functions in the N-end rule pathway of protein degradation where it conjugates Leu, Phe and, less efficiently, Met from aminoacyl-tRNAs to the N-termini of proteins containing an N-terminal arginine or lysine. This chain is Leucyl/phenylalanyl-tRNA--protein transferase, found in Burkholderia orbicola (strain MC0-3).